A 178-amino-acid polypeptide reads, in one-letter code: MQKSISFFVIFSILWGSLFLFSIIGSLGTTPIPLTKDSKFLMSSILPQGWGFFSKNPRDTAIGLYEAENASAKVRWPNMRADNLFGLYRYGRSQGVEMGVIYSQVGKEQWTACKEKDLGACKSKAKTVQLKTPAPRPLLCGSYYLTKEDIVPWSYSKYTPSSYQVKSIVKVVISCSKT.

The chain crosses the membrane as a helical span at residues 7–29; that stretch reads FFVIFSILWGSLFLFSIIGSLGT.

The protein localises to the membrane. This is an uncharacterized protein from Bacillus subtilis (strain 168).